The primary structure comprises 206 residues: Large ribosomal subunit protein uL4 (206 aa).

The protein belongs to the universal ribosomal protein uL4 family. Part of the 50S ribosomal subunit.

Its function is as follows. One of the primary rRNA binding proteins, this protein initially binds near the 5'-end of the 23S rRNA. It is important during the early stages of 50S assembly. It makes multiple contacts with different domains of the 23S rRNA in the assembled 50S subunit and ribosome. Forms part of the polypeptide exit tunnel. This chain is Large ribosomal subunit protein uL4, found in Rhodopseudomonas palustris (strain BisB5).